A 387-amino-acid chain; its full sequence is Cysteine desulfurase IscS (387 aa).

Pyridoxal 5'-phosphate is bound by residues 73–74, Asn155, Gln183, and 203–205; these read AT and SAH. Residue Lys206 is modified to N6-(pyridoxal phosphate)lysine. Thr241 contacts pyridoxal 5'-phosphate. Cys328 (cysteine persulfide intermediate) is an active-site residue. [2Fe-2S] cluster is bound at residue Cys328.

Belongs to the class-V pyridoxal-phosphate-dependent aminotransferase family. NifS/IscS subfamily. Homodimer. Forms a heterotetramer with IscU, interacts with other sulfur acceptors. It depends on pyridoxal 5'-phosphate as a cofactor.

The protein localises to the cytoplasm. It catalyses the reaction (sulfur carrier)-H + L-cysteine = (sulfur carrier)-SH + L-alanine. The protein operates within cofactor biosynthesis; iron-sulfur cluster biosynthesis. In terms of biological role, master enzyme that delivers sulfur to a number of partners involved in Fe-S cluster assembly, tRNA modification or cofactor biosynthesis. Catalyzes the removal of elemental sulfur atoms from cysteine to produce alanine. Functions as a sulfur delivery protein for Fe-S cluster synthesis onto IscU, an Fe-S scaffold assembly protein, as well as other S acceptor proteins. This chain is Cysteine desulfurase IscS, found in Helicobacter pylori (strain Shi470).